Consider the following 481-residue polypeptide: Aspartyl/glutamyl-tRNA(Asn/Gln) amidotransferase subunit B (481 aa).

This sequence belongs to the GatB/GatE family. GatB subfamily. Heterotrimer of A, B and C subunits.

It carries out the reaction L-glutamyl-tRNA(Gln) + L-glutamine + ATP + H2O = L-glutaminyl-tRNA(Gln) + L-glutamate + ADP + phosphate + H(+). The catalysed reaction is L-aspartyl-tRNA(Asn) + L-glutamine + ATP + H2O = L-asparaginyl-tRNA(Asn) + L-glutamate + ADP + phosphate + 2 H(+). In terms of biological role, allows the formation of correctly charged Asn-tRNA(Asn) or Gln-tRNA(Gln) through the transamidation of misacylated Asp-tRNA(Asn) or Glu-tRNA(Gln) in organisms which lack either or both of asparaginyl-tRNA or glutaminyl-tRNA synthetases. The reaction takes place in the presence of glutamine and ATP through an activated phospho-Asp-tRNA(Asn) or phospho-Glu-tRNA(Gln). The chain is Aspartyl/glutamyl-tRNA(Asn/Gln) amidotransferase subunit B from Teredinibacter turnerae (strain ATCC 39867 / T7901).